The primary structure comprises 336 residues: Protein FPV127 (336 aa).

The interval 1 to 22 (MGGGLVLPTRDPPKEQDTSETA) is disordered.

It belongs to the poxviruses A16/G9/J5 family.

In Vertebrata (FPV), this protein is Protein FPV127.